A 568-amino-acid chain; its full sequence is 2-succinyl-5-enolpyruvyl-6-hydroxy-3-cyclohexene-1-carboxylate synthase (568 aa).

It belongs to the TPP enzyme family. MenD subfamily. As to quaternary structure, homodimer. It depends on Mg(2+) as a cofactor. Mn(2+) is required as a cofactor. Requires thiamine diphosphate as cofactor.

It catalyses the reaction isochorismate + 2-oxoglutarate + H(+) = 5-enolpyruvoyl-6-hydroxy-2-succinyl-cyclohex-3-ene-1-carboxylate + CO2. It participates in quinol/quinone metabolism; 1,4-dihydroxy-2-naphthoate biosynthesis; 1,4-dihydroxy-2-naphthoate from chorismate: step 2/7. Its pathway is quinol/quinone metabolism; menaquinone biosynthesis. In terms of biological role, catalyzes the thiamine diphosphate-dependent decarboxylation of 2-oxoglutarate and the subsequent addition of the resulting succinic semialdehyde-thiamine pyrophosphate anion to isochorismate to yield 2-succinyl-5-enolpyruvyl-6-hydroxy-3-cyclohexene-1-carboxylate (SEPHCHC). In Mannheimia succiniciproducens (strain KCTC 0769BP / MBEL55E), this protein is 2-succinyl-5-enolpyruvyl-6-hydroxy-3-cyclohexene-1-carboxylate synthase.